Reading from the N-terminus, the 459-residue chain is Phosphoenolpyruvate carboxylase (459 aa).

This sequence belongs to the PEPCase type 2 family. Homotetramer. Mg(2+) is required as a cofactor.

It carries out the reaction oxaloacetate + phosphate = phosphoenolpyruvate + hydrogencarbonate. Catalyzes the irreversible beta-carboxylation of phosphoenolpyruvate (PEP) to form oxaloacetate (OAA), a four-carbon dicarboxylic acid source for the tricarboxylic acid cycle. This Pyrobaculum calidifontis (strain DSM 21063 / JCM 11548 / VA1) protein is Phosphoenolpyruvate carboxylase.